The sequence spans 595 residues: Isoprene synthase, chloroplastic (595 aa).

The transit peptide at 1–37 directs the protein to the chloroplast; sequence MATELLCLHRPISLTHKLFRNPLPKVIQATPLTLKLR. Residue Asp345 coordinates dimethylallyl diphosphate. Residues Asp345 and Asp349 each coordinate Mg(2+). The DDXXD motif signature appears at 345–349; sequence DDIYD. Glu423, Arg486, and Asn489 together coordinate dimethylallyl diphosphate. Positions 489, 493, and 497 each coordinate Mg(2+).

This sequence belongs to the terpene synthase family. Tpsb subfamily. As to quaternary structure, homodimer. Mg(2+) serves as cofactor. It depends on Mn(2+) as a cofactor.

The protein localises to the plastid. It is found in the chloroplast. It catalyses the reaction dimethylallyl diphosphate = isoprene + diphosphate. It participates in secondary metabolite biosynthesis; terpenoid biosynthesis. With respect to regulation, competitive inhibition is mediated by geranyl diphosphate (GPP). Lyase that catalyzes the formation of isoprene from dimethylallyl diphosphate via a syn-periplanar elimination mechanism in which the diphosphate-leaving group serves as a general base. In Populus canescens (Grey poplar), this protein is Isoprene synthase, chloroplastic.